Reading from the N-terminus, the 1139-residue chain is MTIVYDVTGHKGGGGKQHTPQETPDSLHSLAKIRILLALGEGEFEGITSASELRQRVYLDGTPIQNADLSENFPGARVEFRPGTQHQDVIHGFSAVESEQSVGVKLENGTPWVRQINDTSLDAVRVRIGIPALYTSEDNGDLVGGRIDYKIVVYTDNADPREFTFAAVGKTMSLYERDHRIELPPNVNTGWRVEVHRITADSTSAKVVNDIQVQSITEIIDARLRYPLTALLFVEFDAKAFQNIPRVSIKCKGRKVLIPNNYDPINHTYSGDWDGTFKRAWSDNPAWHWYDICITERFGLGRRIKPQMLNRYALYQIAQRCDQLVSDGNGGREIRFKNDMYIQSQTDAWTVLKDLAAIFAGMTWWGNQMLNIVSDQPVAAVSHTITNASVIDGRFDYASGSQKTRYSTFAVAYGNPKNHYDDAIATGQRVELVRRHKINRLDITAIGCTRESEAQRRGHWALISNQLDQQVSFKVGMEGLFFIPGSVVAIADTNISGGFETRGGRLLSDPGTRTVLNTDSEITFRPGDKFLVRTDSGNVETREIASVNGNKVTLKTALDADPIPDQPFCVDGDDIQLQKFRITDLEYDDSTSTFSVRGIEYNDSKYDAVDNGARLDPGIFTQVPDGVMKGPESVTITPSQISSQGQLITNVDIVFPPVKDAVVYEIQWRRTSLQNMAVQWGNDWVNIPRTASNGAHIPNVFSGNYQARVRAIGMGEISSPWVSSAITPVEGRLGGLNAPIITNAISGLHQILWKWNHNNAATDISYTELEVRKTGETEWKFLTNVPYPGAEYAQTSLEFGIYQQLRARVADKIGNLSDWSAPFEGQVSDKVDEYMKGLDDEFLTSEDGKRFQEAIDTVPQGIYEAMLTDAQQLFNARAEYKGIYAEIKVAYNVAADAHKAVAQLETLIGTRLDDAEAAIHTLQTAQSTQEQAFAQYQQTVAAKFSEQEAAIQQVQTATADVAGALAEYKTQVAAQFGQQSAAIEQKMTSSFNHAGGSATYSLKAGVTYNGTYYDAGMQLSVVTEGDAVKSSIAFKADQFYIMHPSNGSLSSAFIVDGGAVYIDTARIKDATINFAQITDTLQSNNYDGDTRGWRLGKDGTFINLGTGNGGGMKQTNTQISVKDGNGVLRVQIGEITGSW.

It belongs to the Caudoviricetes tip attachment protein J family. Ubiquitinated by the Bil antiviral defense system when the Bil system is expressed in E.coli MG1655 and infected with this virus, or when this protein is expressed in a strain with the Bil system.

Its subcellular location is the virion. The protein localises to the host cytoplasm. Its function is as follows. Attaches the virion to the host receptor, inducing viral DNA ejection. During tail assembly, initiates distal tail tip assembly. During virus entry to host cell, binds strongly to host receptor in an irreversible attachment. The binding induces structural changes in the tail leading to viral DNA injection. The chain is Tip attachment protein J from Escherichia phage SECphi4.